Reading from the N-terminus, the 2774-residue chain is Microtubule-associated protein 1A (2774 aa).

A phosphoserine mark is found at Ser-114, Ser-117, Ser-118, Ser-121, and Ser-155. Position 177 is a phosphotyrosine (Tyr-177). Residues 310–329 form a disordered region; the sequence is PSKIKHRADSKESLKAAPKT. Phosphoserine occurs at positions 319 and 322. Residues 336 to 338 form repeat 1; the sequence is KRE. The 11 X 3 AA repeats of K-K-[DE] stretch occupies residues 336-541; it reads KREEVLEEGA…TQDFEELKRE (206 aa). Basic and acidic residues predominate over residues 342-390; it reads EEGAKEARSELAKELAKTEKKAKEPSEKPPEKPSKSERVRGESSEALKA. Disordered stretches follow at residues 342 to 718, 737 to 808, 845 to 939, 957 to 1078, 1093 to 1344, 1357 to 1646, 1693 to 1725, 1739 to 1843, and 1861 to 2644; these read EEGA…SFLS, TIPG…TELT, EDQS…VGKE, FGAP…QTGC, ETGE…ILPE, QKDG…SPEQ, ESTF…KDFQ, LAES…VPFS, and AELE…LVNG. The residue at position 384 (Ser-384) is a Phosphoserine. The segment covering 391–406 has biased composition (basic residues); sequence EKRRLIKDKAGKKHLK. Composition is skewed to basic and acidic residues over residues 407–464 and 484–500; these read EKIS…KPDL and VKVD…ELSS. 9 repeat units span residues 415-417, 420-422, 424-426, 427-429, 431-433, 436-438, 440-442, 444-446, and 449-451. Residue Thr-504 is modified to Phosphothreonine. Positions 506-516 are enriched in low complexity; sequence PAQKGAAPPAA. Phosphoserine occurs at positions 526 and 527. Composition is skewed to basic and acidic residues over residues 536 to 554 and 584 to 595; these read EELK…DTGL and EGEHVEREKEVV. The stretch at 539–541 is repeat 11; it reads KRE. Residues Ser-604 and Ser-611 each carry the phosphoserine modification. Composition is skewed to basic and acidic residues over residues 614–631 and 638–675; these read EVEK…REAE and AARE…ETKA. Residue Ser-643 is modified to Phosphoserine. Thr-663 is modified (phosphothreonine). Residues Ser-666, Ser-677, Ser-690, and Ser-785 each carry the phosphoserine modification. Polar residues-rich tracts occupy residues 845 to 858 and 869 to 881; these read EDQS…PQTE and TVTS…TEAT. 4 positions are modified to phosphoserine: Ser-872, Ser-875, Ser-876, and Ser-889. Thr-892 is modified (phosphothreonine). Phosphoserine is present on residues Ser-894, Ser-898, Ser-907, Ser-980, Ser-990, Ser-998, Ser-1007, Ser-1013, Ser-1022, Ser-1029, Ser-1037, Ser-1061, Ser-1132, Ser-1134, Ser-1148, Ser-1160, Ser-1178, Ser-1188, Ser-1191, Ser-1197, Ser-1206, and Ser-1209. Basic and acidic residues predominate over residues 1008 to 1028; sequence PVEDKSEPRDFQEDSWGETKH. Polar residues predominate over residues 1142-1157; it reads SVLSVVSPDTTKQEAT. Residues 1180–1190 show a composition bias toward polar residues; sequence EDTQSLSFSEE. The segment covering 1198-1212 has biased composition (polar residues); sequence LDISSKQLSPESLGT. Residues 1220–1236 show a composition bias toward basic and acidic residues; it reads LGKEERGPVMKAEDDSC. A phosphoserine mark is found at Ser-1252, Ser-1280, Ser-1301, Ser-1304, and Ser-1307. Positions 1293-1308 are enriched in low complexity; the sequence is TSDSSLTKSPESLSSP. Basic and acidic residues-rich tracts occupy residues 1317 to 1336, 1357 to 1409, 1416 to 1428, 1436 to 1479, and 1487 to 1574; these read WEGK…ETRQ, QKDG…EDQG, AEKD…RDTD, EPRD…EHSI, and RAPD…KADS. Residues Ser-1504, Ser-1568, Ser-1574, and Ser-1594 each carry the phosphoserine modification. The span at 1599–1613 shows a compositional bias: basic and acidic residues; the sequence is SKAREQEKKYWKEQD. Ser-1622, Ser-1643, Ser-1715, Ser-1742, Ser-1757, Ser-1763, and Ser-1767 each carry phosphoserine. Positions 1707–1718 are enriched in polar residues; that stretch reads TPLQHTPRSPWT. At Thr-1772 the chain carries Phosphothreonine. Phosphoserine occurs at positions 1778 and 1784. A compositionally biased stretch (polar residues) spans 1789-1803; it reads TESTAPMRNEPTTPS. Residues 1818–1839 are compositionally biased toward pro residues; that stretch reads LPPAPLSPAPAPPTPAPEPHTP. Basic and acidic residues predominate over residues 1873-1885; the sequence is KDYRKAEGEREGE. Ser-1897 carries the post-translational modification Phosphoserine. A compositionally biased stretch (basic and acidic residues) spans 1908–1930; sequence ATRDTEQTEPEQREPTPYPDERS. Thr-1923 is modified (phosphothreonine). The span at 1984–1997 shows a compositional bias: polar residues; it reads SSPASPQNLQSDTP. A Phosphoserine modification is found at Ser-1988. Pro residues predominate over residues 2008 to 2034; the sequence is AVPPRQEPDPGPNVEPSITPPAVPPRA. A Phosphothreonine modification is found at Thr-2026. A phosphoserine mark is found at Ser-2043 and Ser-2077. Positions 2055–2092 are enriched in basic and acidic residues; that stretch reads PDRRTPSPKETGRGHWDDGTNDSDLEKGAREQPEKETR. Positions 2115 to 2125 are enriched in low complexity; it reads SSLSSDSHLGS. A compositionally biased stretch (pro residues) spans 2144-2153; sequence PAPPQLPSPA. 6 positions are modified to phosphoserine: Ser-2204, Ser-2221, Ser-2225, Ser-2228, Ser-2229, and Ser-2260. Positions 2226–2237 are enriched in polar residues; the sequence is EGSSSEATTPVI. The span at 2271-2287 shows a compositional bias: low complexity; the sequence is DLTPLSPAPSASLDLAP. A compositionally biased stretch (pro residues) spans 2288 to 2298; that stretch reads APAPAPAPAPG. The segment covering 2299 to 2309 has biased composition (low complexity); that stretch reads LPGDLGDGTLP. Residues 2352–2364 are compositionally biased toward basic and acidic residues; it reads AEKEEAEAPHAWE. Ser-2424 is subject to Phosphoserine. Positions 2477-2489 are enriched in low complexity; the sequence is SASDSGSSQSDSD. Residues 2534–2550 are compositionally biased toward pro residues; sequence DPPPTPLPDPRPSPPRP. A compositionally biased stretch (basic and acidic residues) spans 2565 to 2575; it reads GRVERLREKGR. Residues 2613-2623 show a composition bias toward low complexity; that stretch reads RTVPRPRSTPS. A phosphoserine mark is found at Ser-2620 and Ser-2635.

The protein belongs to the MAP1 family. 3 different light chains, LC1 (a cleavage product of MAP1B), LC2 (a cleavage product of MAP1A) and LC3 (produced by one of the MAP1LC3 genes), can associate with the MAP1A or MAP1B heavy chains. Interacts with guanylate kinase-like domain of DLG1, DLG2 and DLG4. Binds to CSNK1D. Interacts with TIAM2. In terms of assembly, interacts with ELAVL4. In terms of processing, phosphorylated by CSNK1D. Post-translationally, LC2 is generated from MAP1A by proteolytic processing. It is free to associate with both MAP1A and MAP1B. Brain, heart and muscle.

It localises to the cytoplasm. The protein resides in the cytoskeleton. Its function is as follows. Structural protein involved in the filamentous cross-bridging between microtubules and other skeletal elements. This chain is Microtubule-associated protein 1A (Map1a), found in Rattus norvegicus (Rat).